A 4303-amino-acid chain; its full sequence is Polycystin-1 (4303 aa).

The N-terminal stretch at methionine 1–alanine 23 is a signal peptide. The 44-residue stretch at glycine 24–alanine 67 folds into the LRRNT domain. The Extracellular segment spans residues glycine 24–asparagine 3074. Asparagine 50 and asparagine 89 each carry an N-linked (GlcNAc...) asparagine glycan. LRR repeat units follow at residues aspartate 68–serine 91 and alanine 92–asparagine 113. 2 N-linked (GlcNAc...) asparagine glycosylation sites follow: asparagine 116 and asparagine 121. Positions asparagine 125 to glutamate 178 constitute an LRRCT domain. Residues glycine 177–alanine 271 form the WSC domain. An N-linked (GlcNAc...) asparagine glycan is attached at asparagine 187. A PKD 1 domain is found at serine 272–leucine 359. The C-type lectin domain maps to glycine 415–glutamate 531. Cystine bridges form between cysteine 436-cysteine 530 and cysteine 508-cysteine 522. The interval alanine 616 to glutamine 635 is disordered. N-linked (GlcNAc...) asparagine glycosylation is found at asparagine 621 and asparagine 632. Residues proline 638 to serine 671 form the LDL-receptor class A; atypical domain. 3 disulfide bridges follow: cysteine 640–cysteine 653, cysteine 647–cysteine 665, and cysteine 660–cysteine 669. In terms of domain architecture, PKD 2 spans leucine 743 to valine 817. 32 N-linked (GlcNAc...) asparagine glycosylation sites follow: asparagine 746, asparagine 810, asparagine 841, asparagine 854, asparagine 890, asparagine 921, asparagine 1004, asparagine 1010, asparagine 1034, asparagine 1072, asparagine 1113, asparagine 1178, asparagine 1194, asparagine 1240, asparagine 1269, asparagine 1336, asparagine 1348, asparagine 1382, asparagine 1450, asparagine 1455, asparagine 1474, asparagine 1518, asparagine 1541, asparagine 1554, asparagine 1563, asparagine 1647, asparagine 1661, asparagine 1733, asparagine 1791, asparagine 1834, asparagine 1867, and asparagine 1880. PKD domains lie at alanine 855–alanine 928, leucine 935–glutamine 1020, glutamine 1023–valine 1129, proline 1127–leucine 1215, arginine 1213–arginine 1298, leucine 1294–valine 1383, asparagine 1382–threonine 1469, valine 1468–leucine 1551, glycine 1550–leucine 1635, glycine 1634–leucine 1721, glycine 1719–leucine 1805, isoleucine 1807–leucine 1890, glycine 1889–leucine 1974, proline 1977–valine 2057, and alanine 2060–glutamate 2148. 18 N-linked (GlcNAc...) asparagine glycosylation sites follow: asparagine 1991, asparagine 2050, asparagine 2074, asparagine 2125, asparagine 2248, asparagine 2353, asparagine 2395, asparagine 2412, asparagine 2567, asparagine 2578, asparagine 2645, asparagine 2718, asparagine 2754, asparagine 2841, asparagine 2878, asparagine 2925, asparagine 2956, and asparagine 2994. The REJ domain occupies cysteine 2146 to proline 2833. The 202-residue stretch at proline 2862 to arginine 3063 folds into the GAIN-B domain. A disulfide bridge links cysteine 3015 with cysteine 3043. Residues cysteine 3015–arginine 3063 form a GPS region. The chain crosses the membrane as a helical span at residues tyrosine 3075–leucine 3095. The Cytoplasmic portion of the chain corresponds to histidine 3096–arginine 3277. Residues phenylalanine 3118–glutamate 3233 enclose the PLAT domain. The helical transmembrane segment at isoleucine 3278–tryptophan 3298 threads the bilayer. Over tyrosine 3299–valine 3323 the chain is Extracellular. Residues alanine 3324 to phenylalanine 3344 form a helical membrane-spanning segment. At arginine 3345–histidine 3559 the chain is on the cytoplasmic side. The helical transmembrane segment at glycine 3560–phenylalanine 3580 threads the bilayer. The Extracellular segment spans residues proline 3581–proline 3582. A helical transmembrane segment spans residues glycine 3583–tryptophan 3603. Over glutamate 3604 to lysine 3665 the chain is Cytoplasmic. A helical transmembrane segment spans residues arginine 3666–leucine 3686. Residues alanine 3687–leucine 3901 are Extracellular-facing. N-linked (GlcNAc...) asparagine glycans are attached at residues asparagine 3738, asparagine 3790, and asparagine 3845. A helical membrane pass occupies residues leucine 3902–tryptophan 3922. Residues histidine 3923 to alanine 3935 lie on the Cytoplasmic side of the membrane. The chain crosses the membrane as a helical span at residues tryptophan 3936–leucine 3956. At glycine 3957–serine 3984 the chain is on the extracellular side. The helical transmembrane segment at serine 3985 to glutamine 4005 threads the bilayer. Residues leucine 4006–leucine 4027 are Cytoplasmic-facing. The chain crosses the membrane as a helical span at residues glycine 4028–valine 4048. Residues serine 4049–leucine 4090 lie on the Extracellular side of the membrane. Residues tryptophan 4091–tyrosine 4110 traverse the membrane as a helical segment. Residues histidine 4111–threonine 4303 are Cytoplasmic-facing. Disordered stretches follow at residues proline 4160 to glycine 4196 and leucine 4243 to threonine 4303. Serine 4166 carries the phosphoserine; by PRKX; in vitro modification. Residues serine 4185 to aspartate 4195 show a composition bias toward polar residues. Residues glutamate 4220–serine 4251 are a coiled coil. A compositionally biased stretch (low complexity) spans arginine 4253–alanine 4269. A compositionally biased stretch (basic residues) spans leucine 4292–threonine 4303.

Belongs to the polycystin family. Component of the heterotetrameric polycystin channel complex with PKD2; the tetramer contains one PKD1 chain and three PKD2 chains. Interacts with PKD2; the interaction is required for ciliary localization. Interacts with PKD2L1. Interacts with PRKX; involved in differentiation and controlled morphogenesis of the kidney. Interacts (via extracellular domain) with WNT3A, WNT4, WNT5A and WNT9B. Interacts with DVL1 and DVL2. Interacts with NPHP1 (via SH3 domain). Interacts with BBS1, BBS4, BBS5 and TTC8. Interacts with RGS7. Interacts (via the PKD repeats in the N-terminal extracellular region) with EPCIP; the interaction is not dependent on N-glycosylation of either protein. Post-translationally, N-glycosylated. After synthesis, undergoes cleavage between Leu-3048 and Thr-3049 in the GPS region of the GAIN-B domain. Cleavage at the GPS region occurs through a cis-autoproteolytic mechanism involving an ester-intermediate via N-O acyl rearrangement. This process takes place in the early secretory pathway, depends on initial N-glycosylation, and requires the REJ domain. There is evidence that cleavage at GPS region is incomplete. Uncleaved and cleaved products may have different functions in vivo.

Its subcellular location is the cell membrane. It localises to the cell projection. The protein localises to the cilium. It is found in the endoplasmic reticulum. The protein resides in the golgi apparatus. Its subcellular location is the vesicle. It localises to the secreted. The protein localises to the extracellular exosome. In terms of biological role, component of a heteromeric calcium-permeable ion channel formed by PKD1 and PKD2 that is activated by interaction between PKD1 and a Wnt family member, such as WNT3A and WNT9B. Both PKD1 and PKD2 are required for channel activity. Involved in renal tubulogenesis. Involved in fluid-flow mechanosensation by the primary cilium in renal epithelium. Acts as a regulator of cilium length, together with PKD2. The dynamic control of cilium length is essential in the regulation of mechanotransductive signaling. The cilium length response creates a negative feedback loop whereby fluid shear-mediated deflection of the primary cilium, which decreases intracellular cAMP, leads to cilium shortening and thus decreases flow-induced signaling. May be an ion-channel regulator. Involved in adhesive protein-protein and protein-carbohydrate interactions. Likely to be involved with polycystin-1-interacting protein 1 in the detection, sequestration and exocytosis of senescent mitochondria. The chain is Polycystin-1 from Homo sapiens (Human).